We begin with the raw amino-acid sequence, 186 residues long: MRKDETSNTSPDISVAQPASALRYHLRPPRRNDGAAIHQLVSECPPLDLNSLYAYLLLCEHHAHTCVVAESPGGRIDGFVSAYLLPTRPDVLFVWQVAVHSRARGHRLGRAMLGHILERQECRHVRHLETTVGPDNQASRRTFAGLAGERGAHVSEQPFFDRQAFGGADHDDEMLLRIGPFTHPPH.

The N-acetyltransferase domain maps to 24-179 (YHLRPPRRND…HDDEMLLRIG (156 aa)).

Belongs to the acetyltransferase family. EctA subfamily.

The catalysed reaction is L-2,4-diaminobutanoate + acetyl-CoA = (2S)-4-acetamido-2-aminobutanoate + CoA + H(+). It functions in the pathway amine and polyamine biosynthesis; ectoine biosynthesis; L-ectoine from L-aspartate 4-semialdehyde: step 2/3. Its function is as follows. Catalyzes the acetylation of L-2,4-diaminobutyrate (DABA) to gamma-N-acetyl-alpha,gamma-diaminobutyric acid (ADABA) with acetyl coenzyme A. This chain is L-2,4-diaminobutyric acid acetyltransferase (ectA), found in Bordetella parapertussis (strain 12822 / ATCC BAA-587 / NCTC 13253).